The following is a 159-amino-acid chain: Peptide deformylase (159 aa).

Fe cation-binding residues include Cys88 and His130. Glu131 is an active-site residue. Residue His134 coordinates Fe cation.

This sequence belongs to the polypeptide deformylase family. Fe(2+) serves as cofactor.

The enzyme catalyses N-terminal N-formyl-L-methionyl-[peptide] + H2O = N-terminal L-methionyl-[peptide] + formate. Functionally, removes the formyl group from the N-terminal Met of newly synthesized proteins. Requires at least a dipeptide for an efficient rate of reaction. N-terminal L-methionine is a prerequisite for activity but the enzyme has broad specificity at other positions. This chain is Peptide deformylase, found in Thermoanaerobacter pseudethanolicus (strain ATCC 33223 / 39E) (Clostridium thermohydrosulfuricum).